The primary structure comprises 1016 residues: Vacuolar membrane protease (1016 aa).

The tract at residues M1 to S36 is disordered. Topologically, residues M1–K57 are cytoplasmic. Residues T58–S78 form a helical membrane-spanning segment. The Vacuolar segment spans residues N79–L408. N147 and N177 each carry an N-linked (GlcNAc...) asparagine glycan. Zn(2+) is bound by residues H191 and D203. E238 (proton acceptor) is an active-site residue. Residues E239, E264, and H337 each coordinate Zn(2+). Residues I409–F429 form a helical membrane-spanning segment. Topologically, residues N430 to G438 are cytoplasmic. Residues F439 to I459 traverse the membrane as a helical segment. At T460–S481 the chain is on the vacuolar side. The N-linked (GlcNAc...) asparagine glycan is linked to N473. Residues T482–F502 form a helical membrane-spanning segment. Topologically, residues K503–D511 are cytoplasmic. A helical transmembrane segment spans residues E512–T532. Residues N533–E547 are Vacuolar-facing. Residues F548–W568 form a helical membrane-spanning segment. The Cytoplasmic segment spans residues S569 to Y646. A disordered region spans residues Y598 to S622. Residues S612–S622 show a composition bias toward low complexity. The helical transmembrane segment at V647–G667 threads the bilayer. Residues L668–L681 are Vacuolar-facing. Residue N669 is glycosylated (N-linked (GlcNAc...) asparagine). A helical transmembrane segment spans residues I682–F702. The Cytoplasmic segment spans residues K703 to R706. Residues L707–S727 form a helical membrane-spanning segment. Over P728 to I1016 the chain is Vacuolar. N-linked (GlcNAc...) asparagine glycans are attached at residues N778, N821, N850, N875, and N977.

Belongs to the peptidase M28 family. Zn(2+) serves as cofactor.

The protein localises to the vacuole membrane. In terms of biological role, may be involved in vacuolar sorting and osmoregulation. The polypeptide is Vacuolar membrane protease (Debaryomyces hansenii (strain ATCC 36239 / CBS 767 / BCRC 21394 / JCM 1990 / NBRC 0083 / IGC 2968) (Yeast)).